The sequence spans 708 residues: Glutamate--tRNA ligase, cytoplasmic (708 aa).

Interaction with ARC1 regions lie at residues 106–115 (NLRTFILGGL) and 141–157 (KVDV…EMDP). 205–207 (RFP) contributes to the L-glutamate binding site. A 'HIGH' region motif is present at residues 210–219 (PSGYLHIGHA). His-215 provides a ligand contact to ATP. Asp-241 is a binding site for L-glutamate. Position 300 is a phosphothreonine (Thr-300). Residues 382-386 (YDFCV) and Arg-400 contribute to the L-glutamate site. Residues Glu-403 and 437 to 441 (LLSKR) contribute to the ATP site. The 'KMSKS' region motif lies at 437–441 (LLSKR).

This sequence belongs to the class-I aminoacyl-tRNA synthetase family. Glutamate--tRNA ligase type 2 subfamily. As to quaternary structure, component of a yeast aminoacyl-tRNA synthase (aaRS) complex formed by methionyl-tRNA synthase MES1, glutamyl-tRNA synthase GUS1 and the tRNA aminoacylation cofactor ARC1 in a stoichiometric complex. Interacts (via N-ter) with ARC1 (via N-ter). Can also form a stable binary complex with ARC1 that is functional in terms of aminoacylation. ARC1 increases the affinity for cognate tRNAs due to the presence of a tRNA binding domain in the middle and C-terminal part of ARC1.

It localises to the cytoplasm. The protein localises to the mitochondrion. It catalyses the reaction tRNA(Glu) + L-glutamate + ATP = L-glutamyl-tRNA(Glu) + AMP + diphosphate. Catalyzes the attachment of glutamate to tRNA(Glu) in a two-step reaction: glutamate is first activated by ATP to form Glu-AMP and then transferred to the acceptor end of tRNA(Glu). In mitochondria, constitutes the nondiscriminating glutamyl-tRNA synthase that generates the mitochondrial mischarged glutamyl-tRNA(Gln) substrate for the tRNA-dependent amidotransferase (AdT), which generates mitochondrial glutaminyl-tRNA(Gln) by transamidation of glutamyl-tRNA(Gln). This Saccharomyces cerevisiae (strain ATCC 204508 / S288c) (Baker's yeast) protein is Glutamate--tRNA ligase, cytoplasmic (GUS1).